The primary structure comprises 229 residues: NAD(P)H-hydrate epimerase (229 aa).

Residues 10-224 (SREVDQIAIE…DIGIPPALLD (215 aa)) form the YjeF N-terminal domain. 57–61 (NNGGD) serves as a coordination point for (6S)-NADPHX. K(+) is bound by residues Asn-58 and Asp-129. (6S)-NADPHX contacts are provided by residues 133–139 (GTGIRGQ) and Asp-167. Ser-170 contributes to the K(+) binding site.

Belongs to the NnrE/AIBP family. K(+) is required as a cofactor.

It catalyses the reaction (6R)-NADHX = (6S)-NADHX. The enzyme catalyses (6R)-NADPHX = (6S)-NADPHX. Catalyzes the epimerization of the S- and R-forms of NAD(P)HX, a damaged form of NAD(P)H that is a result of enzymatic or heat-dependent hydration. This is a prerequisite for the S-specific NAD(P)H-hydrate dehydratase to allow the repair of both epimers of NAD(P)HX. In Rubinisphaera brasiliensis (strain ATCC 49424 / DSM 5305 / JCM 21570 / IAM 15109 / NBRC 103401 / IFAM 1448) (Planctomyces brasiliensis), this protein is NAD(P)H-hydrate epimerase.